Here is a 349-residue protein sequence, read N- to C-terminus: Hydroxymethylglutaryl-CoA synthase (349 aa).

(3S)-3-hydroxy-3-methylglutaryl-CoA contacts are provided by D30 and A31. Catalysis depends on E82, which acts as the Proton donor/acceptor. (3S)-3-hydroxy-3-methylglutaryl-CoA is bound by residues C114 and T155. The active-site Acyl-thioester intermediate is C114. R203 contributes to the CoA binding site. T205 and H238 together coordinate (3S)-3-hydroxy-3-methylglutaryl-CoA. The Proton donor/acceptor role is filled by H238. K243 is a binding site for CoA. Residues N270 and S300 each coordinate (3S)-3-hydroxy-3-methylglutaryl-CoA.

It belongs to the thiolase-like superfamily. Archaeal HMG-CoA synthase family. In terms of assembly, interacts with acetoacetyl-CoA thiolase that catalyzes the precedent step in the pathway and with a DUF35 protein. The acetoacetyl-CoA thiolase/HMG-CoA synthase complex channels the intermediate via a fused CoA-binding site, which allows for efficient coupling of the endergonic thiolase reaction with the exergonic HMGCS reaction.

It catalyses the reaction acetoacetyl-CoA + acetyl-CoA + H2O = (3S)-3-hydroxy-3-methylglutaryl-CoA + CoA + H(+). It functions in the pathway metabolic intermediate biosynthesis; (R)-mevalonate biosynthesis; (R)-mevalonate from acetyl-CoA: step 2/3. Catalyzes the condensation of acetyl-CoA with acetoacetyl-CoA to form 3-hydroxy-3-methylglutaryl-CoA (HMG-CoA). Functions in the mevalonate (MVA) pathway leading to isopentenyl diphosphate (IPP), a key precursor for the biosynthesis of isoprenoid compounds that are building blocks of archaeal membrane lipids. In Methanococcus vannielii (strain ATCC 35089 / DSM 1224 / JCM 13029 / OCM 148 / SB), this protein is Hydroxymethylglutaryl-CoA synthase.